Reading from the N-terminus, the 143-residue chain is Putative mediator of RNA polymerase II transcription subunit 11 (143 aa).

Positions 97–143 form a coiled coil; the sequence is ILSHLEDLNNIVENNQEKQEKEKQEKEKLEKEKLEKEKQQSNEMNID. The interval 109-143 is disordered; the sequence is ENNQEKQEKEKQEKEKLEKEKLEKEKQQSNEMNID. Over residues 111 to 136 the composition is skewed to basic and acidic residues; it reads NQEKQEKEKQEKEKLEKEKLEKEKQQ.

It belongs to the Mediator complex subunit 11 family. As to quaternary structure, component of the Mediator complex.

Its subcellular location is the nucleus. In terms of biological role, component of the Mediator complex, a coactivator involved in the regulated transcription of nearly all RNA polymerase II-dependent genes. Mediator functions as a bridge to convey information from gene-specific regulatory proteins to the basal RNA polymerase II transcription machinery. Mediator is recruited to promoters by direct interactions with regulatory proteins and serves as a scaffold for the assembly of a functional pre-initiation complex with RNA polymerase II and the general transcription factors. The chain is Putative mediator of RNA polymerase II transcription subunit 11 (med11) from Dictyostelium discoideum (Social amoeba).